The chain runs to 322 residues: Probable arabinan endo-1,5-alpha-L-arabinosidase A (322 aa).

An N-terminal signal peptide occupies residues 1 to 19 (MYLPTLAASASLLVGVAHG). The Proton acceptor role is filled by Asp34. Catalysis depends on Glu201, which acts as the Proton donor.

It belongs to the glycosyl hydrolase 43 family.

The protein localises to the secreted. The enzyme catalyses Endohydrolysis of (1-&gt;5)-alpha-arabinofuranosidic linkages in (1-&gt;5)-arabinans.. Its pathway is glycan metabolism; L-arabinan degradation. In terms of biological role, endo-1,5-alpha-L-arabinanase involved in degradation of pectin. Its preferred substrate is linear 1,5-alpha-L-arabinan. This Emericella nidulans (strain FGSC A4 / ATCC 38163 / CBS 112.46 / NRRL 194 / M139) (Aspergillus nidulans) protein is Probable arabinan endo-1,5-alpha-L-arabinosidase A (abnA).